Reading from the N-terminus, the 198-residue chain is MICOS complex subunit MIC26 (198 aa).

Positions 1 to 25 (MFKVIHRYVGPASLSLLTFKVYASS) are cleaved as a signal peptide. The helical transmembrane segment at 108-128 (PGFFPRLGVIGFAGVVGLVLA) threads the bilayer. Ser-162 is a glycosylation site (O-linked (Xyl...) (chondroitin sulfate) serine).

This sequence belongs to the apolipoprotein O/MICOS complex subunit Mic27 family. As to quaternary structure, component of the mitochondrial contact site and cristae organizing system (MICOS) complex, composed of at least MICOS10/MIC10, CHCHD3/MIC19, CHCHD6/MIC25, APOOL/MIC27, IMMT/MIC60, APOO/MIC23/MIC26 and MICOS13/MIC13. This complex was also known under the names MINOS or MitOS complex. The MICOS complex associates with mitochondrial outer membrane proteins SAMM50, MTX1 and MTX2 (together described as components of the mitochondrial outer membrane sorting assembly machinery (SAM) complex) and DNAJC11, mitochondrial inner membrane protein TMEM11 and with HSPA9. The MICOS and SAM complexes together with DNAJC11 are part of a large protein complex spanning both membranes termed the mitochondrial intermembrane space bridging (MIB) complex. Interacts with IMMT/MIC60. Interacts with MICOS10/MIC10 and APOOL/MIC27. In terms of processing, O-glycosylation; glycosaminoglycan of chondroitin-sulfate type.

It localises to the mitochondrion inner membrane. The protein localises to the secreted. The protein resides in the mitochondrion. It is found in the endoplasmic reticulum membrane. Its subcellular location is the golgi apparatus membrane. Functionally, component of the MICOS complex, a large protein complex of the mitochondrial inner membrane that plays crucial roles in the maintenance of crista junctions, inner membrane architecture, and formation of contact sites to the outer membrane. Plays a crucial role in crista junction formation and mitochondrial function. Can induce cardiac lipotoxicity by enhancing mitochondrial respiration and fatty acid metabolism in cardiac myoblasts. Promotes cholesterol efflux from macrophage cells. Detected in HDL, LDL and VLDL. Secreted by a microsomal triglyceride transfer protein (MTTP)-dependent mechanism, probably as a VLDL-associated protein that is subsequently transferred to HDL. The chain is MICOS complex subunit MIC26 (APOO) from Bos taurus (Bovine).